Here is a 279-residue protein sequence, read N- to C-terminus: DegV domain-containing protein SA1258 (279 aa).

The DegV domain occupies 4 to 278 (QIIVTDSTSD…QGAIGLVVLK (275 aa)). Hexadecanoate-binding residues include T61 and S93.

Its function is as follows. May bind long-chain fatty acids, such as palmitate, and may play a role in lipid transport or fatty acid metabolism. The chain is DegV domain-containing protein SA1258 from Staphylococcus aureus (strain N315).